A 93-amino-acid chain; its full sequence is MASLLPQSERETLSNTLPHWQVEAGRLKRNWQFKDFSEAFAFMTRVALLAEAMQHHPNWSNVYNRVSIELTTHDLGGLSDLDVQLARSIDALC.

It belongs to the pterin-4-alpha-carbinolamine dehydratase family.

It catalyses the reaction (4aS,6R)-4a-hydroxy-L-erythro-5,6,7,8-tetrahydrobiopterin = (6R)-L-erythro-6,7-dihydrobiopterin + H2O. The protein is Putative pterin-4-alpha-carbinolamine dehydratase of Synechococcus sp. (strain WH7803).